The primary structure comprises 842 residues: Elongation factor 2 (842 aa).

A tr-type G domain is found at 17–346; that stretch reads ANVRNMSVIA…MIVLHLPSPV (330 aa). GTP-binding positions include 26–33, 158–161, and 213–215; these read AHVDHGKS, NKVD, and SGL. Residue H699 is modified to Diphthamide.

It belongs to the TRAFAC class translation factor GTPase superfamily. Classic translation factor GTPase family. EF-G/EF-2 subfamily.

The protein localises to the cytoplasm. The catalysed reaction is GTP + H2O = GDP + phosphate + H(+). It participates in protein biosynthesis; polypeptide chain elongation. Catalyzes the GTP-dependent ribosomal translocation step during translation elongation. During this step, the ribosome changes from the pre-translocational (PRE) to the post-translocational (POST) state as the newly formed A-site-bound peptidyl-tRNA and P-site-bound deacylated tRNA move to the P and E sites, respectively. Catalyzes the coordinated movement of the two tRNA molecules, the mRNA and conformational changes in the ribosome. The chain is Elongation factor 2 (EFT2) from Meyerozyma guilliermondii (strain ATCC 6260 / CBS 566 / DSM 6381 / JCM 1539 / NBRC 10279 / NRRL Y-324) (Yeast).